Reading from the N-terminus, the 294-residue chain is Elongation factor Ts (294 aa).

The interval 82-85 (TDFV) is involved in Mg(2+) ion dislocation from EF-Tu.

It belongs to the EF-Ts family.

Its subcellular location is the cytoplasm. Functionally, associates with the EF-Tu.GDP complex and induces the exchange of GDP to GTP. It remains bound to the aminoacyl-tRNA.EF-Tu.GTP complex up to the GTP hydrolysis stage on the ribosome. In Nitrosomonas eutropha (strain DSM 101675 / C91 / Nm57), this protein is Elongation factor Ts.